A 394-amino-acid polypeptide reads, in one-letter code: 1-deoxy-D-xylulose 5-phosphate reductoisomerase (394 aa).

NADPH contacts are provided by T13, G14, S15, I16, and N127. Residue K128 participates in 1-deoxy-D-xylulose 5-phosphate binding. E129 contributes to the NADPH binding site. D153 is a Mn(2+) binding site. Residues S154, E155, S184, and H207 each contribute to the 1-deoxy-D-xylulose 5-phosphate site. E155 provides a ligand contact to Mn(2+). G213 serves as a coordination point for NADPH. 1-deoxy-D-xylulose 5-phosphate contacts are provided by S220, N225, K226, and E229. Position 229 (E229) interacts with Mn(2+).

Belongs to the DXR family. Mg(2+) is required as a cofactor. Mn(2+) serves as cofactor.

The enzyme catalyses 2-C-methyl-D-erythritol 4-phosphate + NADP(+) = 1-deoxy-D-xylulose 5-phosphate + NADPH + H(+). Its pathway is isoprenoid biosynthesis; isopentenyl diphosphate biosynthesis via DXP pathway; isopentenyl diphosphate from 1-deoxy-D-xylulose 5-phosphate: step 1/6. Functionally, catalyzes the NADPH-dependent rearrangement and reduction of 1-deoxy-D-xylulose-5-phosphate (DXP) to 2-C-methyl-D-erythritol 4-phosphate (MEP). This is 1-deoxy-D-xylulose 5-phosphate reductoisomerase from Ectopseudomonas mendocina (strain ymp) (Pseudomonas mendocina).